Consider the following 555-residue polypeptide: Formate--tetrahydrofolate ligase (555 aa).

65–72 (TPAGEGKS) serves as a coordination point for ATP.

This sequence belongs to the formate--tetrahydrofolate ligase family.

It carries out the reaction (6S)-5,6,7,8-tetrahydrofolate + formate + ATP = (6R)-10-formyltetrahydrofolate + ADP + phosphate. The protein operates within one-carbon metabolism; tetrahydrofolate interconversion. This chain is Formate--tetrahydrofolate ligase, found in Staphylococcus epidermidis (strain ATCC 35984 / DSM 28319 / BCRC 17069 / CCUG 31568 / BM 3577 / RP62A).